The chain runs to 967 residues: Translation initiation factor IF-2 (967 aa).

Positions 34 to 363 (ASSTVEPPVA…APAVGGVSVP (330 aa)) are disordered. Low complexity-rich tracts occupy residues 51-96 (PAGG…GNAA) and 103-154 (ASEA…TPGP). The span at 184 to 196 (RSEGGAQRGGPRP) shows a compositional bias: gly residues. The span at 197-206 (GGQQRSGKPG) shows a compositional bias: low complexity. The segment covering 300-333 (PRRGGGPGGGPGGGGGFRGRGGRGGTQGAFGRGG) has biased composition (gly residues). A compositionally biased stretch (basic residues) spans 334–345 (ARGKHRKSKRAK). A tr-type G domain is found at 460–632 (PRPPVVTVMG…IVLTADGALE (173 aa)). Residues 469 to 476 (GHVDHGKT) are G1. 469–476 (GHVDHGKT) provides a ligand contact to GTP. Residues 494-498 (GITQH) are G2. Positions 519 to 522 (DTPG) are G3. GTP-binding positions include 519–523 (DTPGH) and 573–576 (NKVD). Residues 573–576 (NKVD) are G4. Residues 609–611 (SAR) are G5.

Belongs to the TRAFAC class translation factor GTPase superfamily. Classic translation factor GTPase family. IF-2 subfamily.

It localises to the cytoplasm. In terms of biological role, one of the essential components for the initiation of protein synthesis. Protects formylmethionyl-tRNA from spontaneous hydrolysis and promotes its binding to the 30S ribosomal subunits. Also involved in the hydrolysis of GTP during the formation of the 70S ribosomal complex. The chain is Translation initiation factor IF-2 from Kocuria rhizophila (strain ATCC 9341 / DSM 348 / NBRC 103217 / DC2201).